Here is a 175-residue protein sequence, read N- to C-terminus: Co-chaperone protein HscB homolog (175 aa).

Residues 7–79 (SHFDLFDLPA…LKRATYLLHL (73 aa)) form the J domain.

It belongs to the HscB family. As to quaternary structure, interacts with HscA and stimulates its ATPase activity.

Functionally, co-chaperone involved in the maturation of iron-sulfur cluster-containing proteins. Seems to help targeting proteins to be folded toward HscA. This Paraburkholderia phytofirmans (strain DSM 17436 / LMG 22146 / PsJN) (Burkholderia phytofirmans) protein is Co-chaperone protein HscB homolog.